The primary structure comprises 553 residues: Hydroxylamine reductase (553 aa).

[2Fe-2S] cluster-binding residues include cysteine 3, cysteine 6, cysteine 18, and cysteine 25. Residues histidine 252, glutamate 276, cysteine 320, cysteine 408, cysteine 436, cysteine 461, glutamate 495, and lysine 497 each contribute to the hybrid [4Fe-2O-2S] cluster site. Cysteine 408 is subject to Cysteine persulfide.

The protein belongs to the HCP family. [2Fe-2S] cluster serves as cofactor. Requires hybrid [4Fe-2O-2S] cluster as cofactor.

The protein resides in the cytoplasm. The enzyme catalyses A + NH4(+) + H2O = hydroxylamine + AH2 + H(+). Its function is as follows. Catalyzes the reduction of hydroxylamine to form NH(3) and H(2)O. In Aliivibrio fischeri (strain MJ11) (Vibrio fischeri), this protein is Hydroxylamine reductase.